The following is a 668-amino-acid chain: MKHYSIQPANLEFNAEGTPVSRDFDDVYFSNDNGLEETRYVFLGGNQLEVRFPEHPHPLFVVAESGFGTGLNFLTLWQAFDQFREAHPQAQLQRLHFISFEKFPLTRADLALAHQHWPELAPWAEQLQAQWPMPLPGCHRLLLDEGRVTLDLWFGDINELTSQLDDSLNQKVDAWFLDGFAPAKNPDMWTQNLFNAMARLARPGGTLATFTSAGFVRRGLQDAGFTMQKRKGFGRKREMLCGVMEQTLPLPCSAPWFNRTGSSKREAAIIGGGIACALLSLALLRRGWQVTLYCADEAPALGASGNRQGALYPLLSKHDEALNRFFSNAFTFARRFYDQLPVKFDHDWCGVTQLGWDEKSQHKITQMLSMDLPAELAVAVEANAVEQITGVATNCSGITYPQGGWLCPAELTRNVLELAQQQGLQIYYQYQLQNLSRKDDCWLLNFAGDQQATHSVVVLANGHQISRFSQTSTLPVYSVAGQVSHIPTTPELAELKQVLCYDGYLTPQNPANQHHCIGASYHRGSEDTAYSEDDQQQNRQRLIDCFPQAQWAKEVDVSDKEARCGVRCATRDHLPMVGNVPDYEATLVEYASLAEQKDEAVSAPVFDDLFMFAALGSRGLCSAPLCAEILAAQMSDEPIPMDASTLAALNPNRLWVRKLLKGKAVKAG.

The tRNA (mnm(5)s(2)U34)-methyltransferase stretch occupies residues M1–E245. The interval I270–G668 is FAD-dependent cmnm(5)s(2)U34 oxidoreductase.

This sequence in the N-terminal section; belongs to the methyltransferase superfamily. tRNA (mnm(5)s(2)U34)-methyltransferase family. It in the C-terminal section; belongs to the DAO family. FAD serves as cofactor.

The protein resides in the cytoplasm. The enzyme catalyses 5-aminomethyl-2-thiouridine(34) in tRNA + S-adenosyl-L-methionine = 5-methylaminomethyl-2-thiouridine(34) in tRNA + S-adenosyl-L-homocysteine + H(+). Its function is as follows. Catalyzes the last two steps in the biosynthesis of 5-methylaminomethyl-2-thiouridine (mnm(5)s(2)U) at the wobble position (U34) in tRNA. Catalyzes the FAD-dependent demodification of cmnm(5)s(2)U34 to nm(5)s(2)U34, followed by the transfer of a methyl group from S-adenosyl-L-methionine to nm(5)s(2)U34, to form mnm(5)s(2)U34. The protein is tRNA 5-methylaminomethyl-2-thiouridine biosynthesis bifunctional protein MnmC of Shigella boydii serotype 18 (strain CDC 3083-94 / BS512).